The primary structure comprises 928 residues: DNA polymerase I (928 aa).

The 5'-3' exonuclease domain maps to 1–323 (MVQIPENPLI…IDESPSEPAA (323 aa)). Positions 324–517 (ALSYENYVTI…LHLKMWPELQ (194 aa)) constitute a 3'-5' exonuclease domain. A klenow fragment region spans residues 324 to 928 (ALSYENYVTI…GSGENWDQAH (605 aa)). The segment at 521-928 (GPLNVFENIE…GSGENWDQAH (408 aa)) is polymerase.

The protein belongs to the DNA polymerase type-A family. In terms of assembly, single-chain monomer with multiple functions.

The catalysed reaction is DNA(n) + a 2'-deoxyribonucleoside 5'-triphosphate = DNA(n+1) + diphosphate. In terms of biological role, in addition to polymerase activity, this DNA polymerase exhibits 3'-5' and 5'-3' exonuclease activity. It is able to utilize nicked circular duplex DNA as a template and can unwind the parental DNA strand from its template. This chain is DNA polymerase I (polA), found in Salmonella typhimurium (strain LT2 / SGSC1412 / ATCC 700720).